The primary structure comprises 229 residues: Stage III sporulation protein AG (229 aa).

The chain crosses the membrane as a helical span at residues 30–50 (YHYFLFVFVLGVSFMLVSQLF). Disordered stretches follow at residues 64-93 (AVSSQHSADSKEKTAEVFKASKSDKPKDSI) and 136-159 (SNKNTTTEETDKEGGKRSVTDQSS). Over residues 71 to 93 (ADSKEKTAEVFKASKSDKPKDSI) the composition is skewed to basic and acidic residues.

It localises to the cell membrane. The protein is Stage III sporulation protein AG (spoIIIAG) of Bacillus subtilis (strain 168).